The sequence spans 408 residues: G patch domain-containing protein 4 (408 aa).

Met1 carries the post-translational modification N-acetylmethionine. Thr4 is subject to Phosphothreonine. The G-patch domain maps to 11-57 (GMKFAEEQLLKHGWTQGKGLGRKENGITQALRVTLKQDTYGVGHDPA). A Glycyl lysine isopeptide (Lys-Gly) (interchain with G-Cter in SUMO2) cross-link involves residue Lys46. Residue Thr116 is modified to Phosphothreonine. 2 disordered regions span residues 116–141 (TSSG…KPPN) and 187–408 (GQDP…KKRD). Phosphoserine is present on residues Ser128 and Ser130. Composition is skewed to basic and acidic residues over residues 222 to 236 (RSAE…ESIR), 245 to 257 (HQEE…REGT), and 274 to 283 (LKNREHVDRS). The segment covering 340–354 (EEDLNTEDEEVEEAL) has biased composition (acidic residues). A compositionally biased stretch (basic and acidic residues) spans 358 to 372 (GTREAESRSCSDQKR). Basic residues predominate over residues 398–408 (KAKKKKQKKRD).

This is G patch domain-containing protein 4 (GPATCH4) from Bos taurus (Bovine).